Consider the following 130-residue polypeptide: Small ribosomal subunit protein uS11 (130 aa).

This sequence belongs to the universal ribosomal protein uS11 family. As to quaternary structure, part of the 30S ribosomal subunit. Interacts with proteins S7 and S18. Binds to IF-3.

In terms of biological role, located on the platform of the 30S subunit, it bridges several disparate RNA helices of the 16S rRNA. Forms part of the Shine-Dalgarno cleft in the 70S ribosome. This Shewanella baltica (strain OS223) protein is Small ribosomal subunit protein uS11.